A 475-amino-acid polypeptide reads, in one-letter code: Glycogen synthase (475 aa).

Position 15 (Lys15) interacts with ADP-alpha-D-glucose.

It belongs to the glycosyltransferase 1 family. Bacterial/plant glycogen synthase subfamily.

The enzyme catalyses [(1-&gt;4)-alpha-D-glucosyl](n) + ADP-alpha-D-glucose = [(1-&gt;4)-alpha-D-glucosyl](n+1) + ADP + H(+). Its pathway is glycan biosynthesis; glycogen biosynthesis. Synthesizes alpha-1,4-glucan chains using ADP-glucose. This is Glycogen synthase from Alkaliphilus metalliredigens (strain QYMF).